The primary structure comprises 462 residues: A-type ATP synthase subunit B (462 aa).

It belongs to the ATPase alpha/beta chains family. As to quaternary structure, has multiple subunits with at least A(3), B(3), C, D, E, F, H, I and proteolipid K(x).

The protein localises to the cell membrane. Functionally, component of the A-type ATP synthase that produces ATP from ADP in the presence of a proton gradient across the membrane. The B chain is a regulatory subunit. The protein is A-type ATP synthase subunit B of Methanococcus maripaludis (strain DSM 14266 / JCM 13030 / NBRC 101832 / S2 / LL).